Consider the following 266-residue polypeptide: Putative carbamate hydrolase RutD (266 aa).

The AB hydrolase-1 domain occupies 15-239 (PVVVLSAGLG…RVEMPWGGHA (225 aa)).

This sequence belongs to the AB hydrolase superfamily. Hydrolase RutD family.

The enzyme catalyses carbamate + 2 H(+) = NH4(+) + CO2. Its function is as follows. Involved in pyrimidine catabolism. May facilitate the hydrolysis of carbamate, a reaction that can also occur spontaneously. The chain is Putative carbamate hydrolase RutD from Klebsiella variicola (strain At-22).